The primary structure comprises 102 residues: Putative septation protein SpoVG 1 (102 aa).

Belongs to the SpoVG family.

Its function is as follows. Could be involved in septation. The sequence is that of Putative septation protein SpoVG 1 from Listeria monocytogenes serotype 4b (strain F2365).